Consider the following 89-residue polypeptide: Large ribosomal subunit protein bL28 (89 aa).

It belongs to the bacterial ribosomal protein bL28 family.

This is Large ribosomal subunit protein bL28 from Chlamydia caviae (strain ATCC VR-813 / DSM 19441 / 03DC25 / GPIC) (Chlamydophila caviae).